The chain runs to 825 residues: Trimethylamine-N-oxide reductase (825 aa).

A signal peptide (tat-type signal) is located at residues 1–40 (MKKNNVNEQRRDFLKKTSLGVAGSALSGGMVGVVSKSAVA). A Mo-bis(molybdopterin guanine dinucleotide)-binding site is contributed by S187.

It belongs to the prokaryotic molybdopterin-containing oxidoreductase family. Mo-bis(molybdopterin guanine dinucleotide) is required as a cofactor. Post-translationally, predicted to be exported by the Tat system. The position of the signal peptide cleavage has not been experimentally proven.

Its subcellular location is the periplasm. The catalysed reaction is trimethylamine + 2 Fe(III)-[cytochrome c] + H2O = trimethylamine N-oxide + 2 Fe(II)-[cytochrome c] + 3 H(+). Reduces trimethylamine-N-oxide (TMAO) into trimethylamine; an anaerobic reaction coupled to energy-yielding reactions. This Haemophilus influenzae (strain ATCC 51907 / DSM 11121 / KW20 / Rd) protein is Trimethylamine-N-oxide reductase (torZ).